We begin with the raw amino-acid sequence, 180 residues long: Large ribosomal subunit protein uL5 (180 aa).

This sequence belongs to the universal ribosomal protein uL5 family. As to quaternary structure, part of the 50S ribosomal subunit; part of the 5S rRNA/L5/L18/L25 subcomplex. Contacts the 5S rRNA and the P site tRNA. Forms a bridge to the 30S subunit in the 70S ribosome.

Functionally, this is one of the proteins that bind and probably mediate the attachment of the 5S RNA into the large ribosomal subunit, where it forms part of the central protuberance. In the 70S ribosome it contacts protein S13 of the 30S subunit (bridge B1b), connecting the 2 subunits; this bridge is implicated in subunit movement. Contacts the P site tRNA; the 5S rRNA and some of its associated proteins might help stabilize positioning of ribosome-bound tRNAs. The sequence is that of Large ribosomal subunit protein uL5 from Clostridium botulinum (strain Loch Maree / Type A3).